The primary structure comprises 608 residues: Albumin (608 aa).

The N-terminal stretch at 1–18 is a signal peptide; the sequence is MKWVTFLLLLFVSDSAFS. The propeptide occupies 19–24; that stretch reads RGLFRR. Albumin domains are found at residues 19-211, 212-403, and 404-601; these read RGLF…ALKE, KALA…EFQP, and LVEE…KLVA. Histidine 27 contacts Cu cation. Serine 29 is modified (phosphoserine). Ca(2+) contacts are provided by glutamate 30 and aspartate 37. An intrachain disulfide couples cysteine 77 to cysteine 86. Phosphoserine is present on residues serine 82 and serine 89. Histidine 91 serves as a coordination point for Zn(2+). Disulfide bonds link cysteine 99/cysteine 115, cysteine 114/cysteine 125, cysteine 148/cysteine 193, cysteine 192/cysteine 201, cysteine 224/cysteine 270, and cysteine 269/cysteine 277. Glutamate 268 contributes to the Ca(2+) binding site. Residues histidine 271 and aspartate 273 each coordinate Zn(2+). 3 residues coordinate Ca(2+): aspartate 273, glutamate 276, and aspartate 279. Cystine bridges form between cysteine 289–cysteine 303, cysteine 302–cysteine 313, cysteine 340–cysteine 385, cysteine 384–cysteine 393, cysteine 416–cysteine 462, cysteine 461–cysteine 472, cysteine 485–cysteine 501, and cysteine 500–cysteine 511. Serine 297 is subject to Phosphoserine. Position 443 is a phosphoserine (serine 443). Phosphothreonine occurs at positions 444 and 446. Position 460 is an N6-succinyllysine (lysine 460). The residue at position 513 (serine 513) is a Phosphoserine. Intrachain disulfides connect cysteine 538/cysteine 583 and cysteine 582/cysteine 591. An N6-succinyllysine modification is found at lysine 543. N6-methyllysine is present on lysine 558. A Phosphothreonine modification is found at threonine 570. Position 588 is an N6-succinyllysine (lysine 588).

This sequence belongs to the ALB/AFP/VDB family. Interacts with FCGRT; this interaction regulates ALB homeostasis. Interacts with TASOR. In plasma, occurs in a covalently-linked complex with chromophore-bound alpha-1-microglobulin; this interaction does not prevent fatty acid binding to ALB. Plasma.

The protein localises to the secreted. Its function is as follows. Binds water, Ca(2+), Na(+), K(+), fatty acids, hormones, bilirubin and drugs. Its main function is the regulation of the colloidal osmotic pressure of blood. Major zinc transporter in plasma, typically binds about 80% of all plasma zinc. Major calcium and magnesium transporter in plasma, binds approximately 45% of circulating calcium and magnesium in plasma. Potentially has more than two calcium-binding sites and might additionally bind calcium in a non-specific manner. The shared binding site between zinc and calcium at residue Asp-273 suggests a crosstalk between zinc and calcium transport in the blood. The rank order of affinity is zinc &gt; calcium &gt; magnesium. Binds to the bacterial siderophore enterobactin and inhibits enterobactin-mediated iron uptake of E.coli from ferric transferrin, and may thereby limit the utilization of iron and growth of enteric bacteria such as E.coli. Does not prevent iron uptake by the bacterial siderophore aerobactin. This chain is Albumin, found in Mesocricetus auratus (Golden hamster).